A 280-amino-acid polypeptide reads, in one-letter code: Undecaprenyl-diphosphatase (280 aa).

7 helical membrane-spanning segments follow: residues 1–21 (MTLL…PFPV), 45–65 (FLPF…GVFW), 90–110 (IFGL…LLEH), 115–135 (VFGT…LLMV), 151–171 (IATL…LALL), 226–246 (IMVQ…ICSL), and 260–280 (LTPF…VILL).

This sequence belongs to the UppP family.

It localises to the cell inner membrane. The enzyme catalyses di-trans,octa-cis-undecaprenyl diphosphate + H2O = di-trans,octa-cis-undecaprenyl phosphate + phosphate + H(+). Catalyzes the dephosphorylation of undecaprenyl diphosphate (UPP). Confers resistance to bacitracin. In Gluconobacter oxydans (strain 621H) (Gluconobacter suboxydans), this protein is Undecaprenyl-diphosphatase.